Here is a 372-residue protein sequence, read N- to C-terminus: Putative glutamate--cysteine ligase 2 (372 aa).

Belongs to the glutamate--cysteine ligase type 2 family. YbdK subfamily.

The catalysed reaction is L-cysteine + L-glutamate + ATP = gamma-L-glutamyl-L-cysteine + ADP + phosphate + H(+). ATP-dependent carboxylate-amine ligase which exhibits weak glutamate--cysteine ligase activity. This chain is Putative glutamate--cysteine ligase 2, found in Gloeobacter violaceus (strain ATCC 29082 / PCC 7421).